The primary structure comprises 694 residues: Elongation factor G (694 aa).

Residues 8–284 (EKLRNIGIVA…AVIDFLPSPV (277 aa)) enclose the tr-type G domain. GTP is bound by residues 17–24 (AHIDAGKT), 81–85 (DTPGH), and 135–138 (NKMD).

The protein belongs to the TRAFAC class translation factor GTPase superfamily. Classic translation factor GTPase family. EF-G/EF-2 subfamily.

It is found in the cytoplasm. Catalyzes the GTP-dependent ribosomal translocation step during translation elongation. During this step, the ribosome changes from the pre-translocational (PRE) to the post-translocational (POST) state as the newly formed A-site-bound peptidyl-tRNA and P-site-bound deacylated tRNA move to the P and E sites, respectively. Catalyzes the coordinated movement of the two tRNA molecules, the mRNA and conformational changes in the ribosome. The polypeptide is Elongation factor G (Persephonella marina (strain DSM 14350 / EX-H1)).